Consider the following 496-residue polypeptide: Transcription termination/antitermination protein NusA (496 aa).

The S1 motif domain occupies 135–200; the sequence is GQIITGIVKK…RGAQLFISRS (66 aa). Residues 302–370 form the KH domain; that stretch reads CHTMDIAVDI…KNLNINENII (69 aa). 2 consecutive repeat copies span residues 364-414 and 440-490. Residues 364-490 are 2 X 51 AA approximate repeats; it reads NINENIIKIL…LLIMTARNIC (127 aa).

This sequence belongs to the NusA family. As to quaternary structure, monomer. Binds directly to the core enzyme of the DNA-dependent RNA polymerase and to nascent RNA.

It is found in the cytoplasm. In terms of biological role, participates in both transcription termination and antitermination. This is Transcription termination/antitermination protein NusA from Buchnera aphidicola subsp. Acyrthosiphon pisum (strain APS) (Acyrthosiphon pisum symbiotic bacterium).